The chain runs to 391 residues: GTPase Obg (391 aa).

The 159-residue stretch at 1–159 folds into the Obg domain; sequence MKFVDEASIL…RDLLLELMLL (159 aa). The disordered stretch occupies residues 127–147; it reads NTRFKSSVNRTPRQKTNGTPG. Over residues 129–145 the composition is skewed to polar residues; it reads RFKSSVNRTPRQKTNGT. Residues 160–333 enclose the OBG-type G domain; that stretch reads ADVGMLGMPN…LCWDVMTFII (174 aa). GTP is bound by residues 166 to 173, 191 to 195, 213 to 216, 283 to 286, and 314 to 316; these read GMPNAGKS, FTTLV, DIPG, NKID, and SAA. Residues S173 and T193 each contribute to the Mg(2+) site.

The protein belongs to the TRAFAC class OBG-HflX-like GTPase superfamily. OBG GTPase family. In terms of assembly, monomer. It depends on Mg(2+) as a cofactor.

It localises to the cytoplasm. Its function is as follows. An essential GTPase which binds GTP, GDP and possibly (p)ppGpp with moderate affinity, with high nucleotide exchange rates and a fairly low GTP hydrolysis rate. Plays a role in control of the cell cycle, stress response, ribosome biogenesis and in those bacteria that undergo differentiation, in morphogenesis control. This is GTPase Obg from Salmonella arizonae (strain ATCC BAA-731 / CDC346-86 / RSK2980).